The chain runs to 1384 residues: Sterol 3-beta-glucosyltransferase (1384 aa).

Disordered stretches follow at residues 1–64 (MPNM…DGQL), 86–189 (ARFD…TPRA), and 204–229 (DKKQ…QSCA). The segment covering 7–19 (LLEDAKRRVDRRL) has biased composition (basic and acidic residues). A compositionally biased stretch (low complexity) spans 21–36 (ASRQSISSSRIFSSAF). The span at 38–47 (DRLKDDHDAQ) shows a compositional bias: basic and acidic residues. Over residues 146–156 (LRSLKPSPKSS) the composition is skewed to low complexity. A compositionally biased stretch (polar residues) spans 158–172 (GTETTVQTEPPTSDE). Residues 174-189 (SPLASPRRARSATPRA) show a composition bias toward low complexity. Polar residues predominate over residues 209 to 229 (ADQPSSSTKGETDGTSEQSCA). Residues 237–284 (KEMFGFEMPEKVLMEYACSLLQNILLQGYMYVTEGHICFYAYLPRKSA) form the GRAM 1 domain. Residues 285-384 (VTIRSGYLHK…WVKALQKVIF (100 aa)) enclose the PH domain. Disordered regions lie at residues 457–526 (MKTS…RQRD) and 560–629 (NRSD…VNSS). Polar residues-rich tracts occupy residues 458–473 (KTSQ…TSPA), 483–494 (WSLNSDLSQSRG), and 560–572 (NRSD…TIHT). Basic and acidic residues predominate over residues 578 to 588 (PSGDRTGRRLS). Over residues 604 to 629 (RNGQEMQYASSDSDQGTQHPSKVNSS) the composition is skewed to polar residues. The GRAM 2 domain occupies 714-817 (RFRAHFALPS…RDDCAVTVHQ (104 aa)). Serine 901, arginine 902, aspartate 904, alanine 1204, histidine 1206, histidine 1219, glycine 1223, threonine 1224, aspartate 1243, and glutamine 1244 together coordinate UDP-alpha-D-glucose. The segment covering 1322–1336 (VSSTPFSPTPSAKTT) has biased composition (polar residues). The disordered stretch occupies residues 1322 to 1350 (VSSTPFSPTPSAKTTAEQEEDDVDDSEEW). Residues 1338 to 1350 (EQEEDDVDDSEEW) show a composition bias toward acidic residues.

It belongs to the glycosyltransferase 28 family.

The protein localises to the cytoplasm. The protein resides in the preautophagosomal structure membrane. It carries out the reaction a sterol + UDP-alpha-D-glucose = a sterol 3-beta-D-glucoside + UDP + H(+). It catalyses the reaction ergosterol + UDP-alpha-D-glucose = ergosteryl 3-beta-D-glucoside + UDP + H(+). Its function is as follows. Sterol glycosyltransferase responsible for the glycosylation of ergosterol to form ergosterol-glucoside. Involved in cytoplasm to vacuole transport (Cvt), pexophagy or nonselective autophagy. The chain is Sterol 3-beta-glucosyltransferase from Aspergillus oryzae (strain ATCC 42149 / RIB 40) (Yellow koji mold).